The primary structure comprises 1286 residues: X-linked retinitis pigmentosa GTPase regulator-interacting protein 1 (1286 aa).

The segment at 144–193 (QVGHRQLHTAGAPVPEKPKRGPRDRLSYTAPPSFKEHATNENRGEVASKP) is disordered. Composition is skewed to basic and acidic residues over residues 159–169 (EKPKRGPRDRL) and 177–189 (FKEH…RGEV). Residues 294–584 (KAQLTEVQEA…LEGILRSHDL (291 aa)) adopt a coiled-coil conformation. Residues 781–906 (GGRKAQEEEF…AKNESIKGDF (126 aa)) enclose the C2 domain. Disordered regions lie at residues 934 to 1008 (SFLK…RKHG) and 1058 to 1108 (EEEE…PMSQ). Basic and acidic residues-rich tracts occupy residues 940–960 (AQTK…EEKA), 988–998 (HGGERKEKEHQ), and 1070–1084 (KQKE…KESS). Residues 1085–1096 (EQGSEVSEAQTT) are compositionally biased toward polar residues. Residues 1091–1281 (SEAQTTDSDD…VLHAIYKEMT (191 aa)) are interaction with RPGR.

The protein belongs to the RPGRIP1 family. In terms of assembly, forms homodimers and elongated homopolymers. Interacts with RPGR. Interacts with NPHP4. Interacts with NEK4. Interacts with SPATA7. Interacts with CEP290/NPHP6; mediating the association between RPGR and CEP290/NPHP6. Strong expression in retina, with weaker expression in testis. Expressed in other neurons such as amacrine cells. Colocalizes with RGPR in the outer segment of rod photoreceptors and cone outer segments.

It is found in the cell projection. It localises to the cilium. Functionally, may function as scaffolding protein. Required for normal location of RPGR at the connecting cilium of photoreceptor cells. Required for normal disk morphogenesis and disk organization in the outer segment of photoreceptor cells and for survival of photoreceptor cells. The sequence is that of X-linked retinitis pigmentosa GTPase regulator-interacting protein 1 (RPGRIP1) from Homo sapiens (Human).